The sequence spans 915 residues: Protein translocase subunit SecA (915 aa).

Residues glutamine 87, 105-109 (GEGKT), and aspartate 516 each bind ATP. The segment at 866–915 (MTYGAPSDGDIGGSVEDEPLELPEGARVGRNDPCPCGSGKKYKQCHGKLS) is disordered. Positions 899, 901, 910, and 911 each coordinate Zn(2+). A compositionally biased stretch (basic residues) spans 905–915 (KKYKQCHGKLS).

It belongs to the SecA family. As to quaternary structure, monomer and homodimer. Part of the essential Sec protein translocation apparatus which comprises SecA, SecYEG and auxiliary proteins SecDF-YajC and YidC. Zn(2+) serves as cofactor.

The protein resides in the cell inner membrane. It localises to the cytoplasm. It catalyses the reaction ATP + H2O + cellular proteinSide 1 = ADP + phosphate + cellular proteinSide 2.. Its function is as follows. Part of the Sec protein translocase complex. Interacts with the SecYEG preprotein conducting channel. Has a central role in coupling the hydrolysis of ATP to the transfer of proteins into and across the cell membrane, serving both as a receptor for the preprotein-SecB complex and as an ATP-driven molecular motor driving the stepwise translocation of polypeptide chains across the membrane. In Delftia acidovorans (strain DSM 14801 / SPH-1), this protein is Protein translocase subunit SecA.